The chain runs to 579 residues: Probable pectinesterase/pectinesterase inhibitor 7 (579 aa).

Residues 1 to 20 (MESPIFILITLSFFLQSVLA) form the signal peptide. The segment at 22 to 185 (SQTLSNSSTI…TKLLGVSLAL (164 aa)) is pectinesterase inhibitor 7. N-linked (GlcNAc...) asparagine glycans are attached at residues asparagine 27, asparagine 115, asparagine 174, asparagine 274, asparagine 277, asparagine 287, asparagine 326, and asparagine 333. Residues 265-564 (VTVSQDGTGN…TVTGLFIEAD (300 aa)) are pectinesterase 7. Threonine 342 serves as a coordination point for substrate. Asparagine 359 carries an N-linked (GlcNAc...) asparagine glycan. Glutamine 372 contacts substrate. The active-site Proton donor; for pectinesterase activity is the aspartate 395. Residues cysteine 409 and cysteine 429 are joined by a disulfide bond. Catalysis depends on aspartate 416, which acts as the Nucleophile; for pectinesterase activity. N-linked (GlcNAc...) asparagine glycosylation is found at asparagine 462 and asparagine 475. Residues arginine 484 and tryptophan 486 each contribute to the substrate site. Asparagine 526, asparagine 533, asparagine 547, and asparagine 553 each carry an N-linked (GlcNAc...) asparagine glycan.

In the N-terminal section; belongs to the PMEI family. It in the C-terminal section; belongs to the pectinesterase family. Expressed in siliques.

It is found in the secreted. It localises to the cell wall. The enzyme catalyses [(1-&gt;4)-alpha-D-galacturonosyl methyl ester](n) + n H2O = [(1-&gt;4)-alpha-D-galacturonosyl](n) + n methanol + n H(+). The protein operates within glycan metabolism; pectin degradation; 2-dehydro-3-deoxy-D-gluconate from pectin: step 1/5. In terms of biological role, acts in the modification of cell walls via demethylesterification of cell wall pectin. The protein is Probable pectinesterase/pectinesterase inhibitor 7 (PME7) of Arabidopsis thaliana (Mouse-ear cress).